We begin with the raw amino-acid sequence, 147 residues long: Cytochrome c-type biogenesis protein CcmE (147 aa).

Topologically, residues 1–7 (MKPRHKR) are cytoplasmic. Residues 8-28 (AAIIAGGLAALGIAAYLVLNA) form a helical; Signal-anchor for type II membrane protein membrane-spanning segment. Residues 29 to 147 (FQSNLVFFFS…QIQKTIKSLK (119 aa)) are Periplasmic-facing. His-121 and Tyr-125 together coordinate heme.

The protein belongs to the CcmE/CycJ family.

Its subcellular location is the cell inner membrane. Heme chaperone required for the biogenesis of c-type cytochromes. Transiently binds heme delivered by CcmC and transfers the heme to apo-cytochromes in a process facilitated by CcmF and CcmH. This Albidiferax ferrireducens (strain ATCC BAA-621 / DSM 15236 / T118) (Rhodoferax ferrireducens) protein is Cytochrome c-type biogenesis protein CcmE.